A 254-amino-acid chain; its full sequence is Geranylgeranylglyceryl phosphate synthase (254 aa).

Residues Asp-27 and Ser-56 each coordinate Mg(2+). Residues Tyr-174–Gly-180, Gly-212–Gly-213, and Gly-234–Thr-235 each bind sn-glycerol 1-phosphate.

The protein belongs to the GGGP/HepGP synthase family. Group II subfamily. In terms of assembly, homohexamer. Requires Mg(2+) as cofactor.

Its subcellular location is the cytoplasm. The catalysed reaction is sn-glycerol 1-phosphate + (2E,6E,10E)-geranylgeranyl diphosphate = sn-3-O-(geranylgeranyl)glycerol 1-phosphate + diphosphate. It functions in the pathway membrane lipid metabolism; glycerophospholipid metabolism. Prenyltransferase that catalyzes the transfer of the geranylgeranyl moiety of geranylgeranyl diphosphate (GGPP) to the C3 hydroxyl of sn-glycerol-1-phosphate (G1P). This reaction is the first ether-bond-formation step in the biosynthesis of archaeal membrane lipids. The protein is Geranylgeranylglyceryl phosphate synthase of Aeropyrum pernix (strain ATCC 700893 / DSM 11879 / JCM 9820 / NBRC 100138 / K1).